Reading from the N-terminus, the 72-residue chain is Translation initiation factor IF-1 (72 aa).

The S1-like domain maps to 1–72 (MSKEDSIEVT…TKGRITFRHR (72 aa)).

It belongs to the IF-1 family. Component of the 30S ribosomal translation pre-initiation complex which assembles on the 30S ribosome in the order IF-2 and IF-3, IF-1 and N-formylmethionyl-tRNA(fMet); mRNA recruitment can occur at any time during PIC assembly.

The protein localises to the cytoplasm. Functionally, one of the essential components for the initiation of protein synthesis. Stabilizes the binding of IF-2 and IF-3 on the 30S subunit to which N-formylmethionyl-tRNA(fMet) subsequently binds. Helps modulate mRNA selection, yielding the 30S pre-initiation complex (PIC). Upon addition of the 50S ribosomal subunit IF-1, IF-2 and IF-3 are released leaving the mature 70S translation initiation complex. This is Translation initiation factor IF-1 from Solibacter usitatus (strain Ellin6076).